Reading from the N-terminus, the 203-residue chain is Suppressor of RNA silencing p3 (203 aa).

Belongs to the tenuiviruses p3 protein family. As to quaternary structure, homodimer.

It is found in the host cytoplasm. Acts as a suppressor of RNA-mediated gene silencing, also known as post-transcriptional gene silencing (PTGS), presumably through the binding of dsRNA. This chain is Suppressor of RNA silencing p3, found in Oryza sativa (Rice).